Here is a 275-residue protein sequence, read N- to C-terminus: Elongation factor Ts (275 aa).

The segment at 76-79 (TDFV) is involved in Mg(2+) ion dislocation from EF-Tu.

Belongs to the EF-Ts family.

Its subcellular location is the cytoplasm. Functionally, associates with the EF-Tu.GDP complex and induces the exchange of GDP to GTP. It remains bound to the aminoacyl-tRNA.EF-Tu.GTP complex up to the GTP hydrolysis stage on the ribosome. The sequence is that of Elongation factor Ts from Corynebacterium kroppenstedtii (strain DSM 44385 / JCM 11950 / CIP 105744 / CCUG 35717).